The sequence spans 147 residues: Angiogenin (147 aa).

Residues 1-24 form the signal peptide; sequence MVMGLGVLLLVFVLGLGLTPPTLA. Residue glutamine 25 is modified to Pyrrolidone carboxylic acid. The active-site Proton acceptor is histidine 37. 2 residues coordinate tRNA: arginine 45 and aspartate 46. Cystine bridges form between cysteine 50/cysteine 105, cysteine 63/cysteine 116, and cysteine 81/cysteine 131. The short motif at 55–59 is the Nucleolar localization signal element; it reads RRRGL. Residues cysteine 105 and valine 127 each coordinate tRNA. The Proton donor role is filled by histidine 138.

The protein belongs to the pancreatic ribonuclease family. In terms of assembly, homodimer. Interacts with RNH1; inhibiting ANG ribonuclease activity. Interacts with PCNA.

The protein localises to the secreted. Its subcellular location is the nucleus. It is found in the nucleolus. The protein resides in the cytoplasm. It localises to the stress granule. Its activity is regulated as follows. Has weak tRNA ribonuclease activity by itself due to partial autoinhibition by its C-terminus, which folds into a short alpha-helix that partially occludes the substrate-binding site. In absence of stress, the ribonuclease activity is inhibited by RNH1 in the cytoplasm. In response to stress, dissociates from RNH1 in the cytoplasm and associates with cytoplasmic ribosomes with vacant A-sites: ribosomes directly activate the tRNA ribonuclease activity of ANG by refolding the C-terminal alpha-helix. In response to stress, the angiogenic activity of ANG is inhibited by RNH1 in the nucleus. In terms of biological role, secreted ribonuclease that can either promote or restrict cell proliferation of target cells, depending on the context. Endocytosed in target cells via its receptor PLXNB2 and translocates to the cytoplasm or nucleus. Under stress conditions, localizes to the cytoplasm and promotes the assembly of stress granules (SGs): specifically cleaves a subset of tRNAs within anticodon loops to produce tRNA-derived stress-induced fragments (tiRNAs), resulting in translation repression and inhibition of cell proliferation. tiRNas also prevent formation of apoptosome, thereby promoting cell survival. Preferentially cleaves RNAs between a pyrimidine and an adenosine residue, suggesting that it cleaves the anticodon loop of tRNA(Ala) (32-UUAGCAU-38) after positions 33 and 36. Cleaves a subset of tRNAs, including tRNA(Ala), tRNA(Glu), tRNA(Gly), tRNA(Lys), tRNA(Val), tRNA(His), tRNA(Asp) and tRNA(Sec). Under growth conditions and in differentiated cells, translocates to the nucleus and stimulates ribosomal RNA (rRNA) transcription, including that containing the initiation site sequences of 45S rRNA, thereby promoting cell growth and proliferation. Angiogenin induces vascularization of normal and malignant tissues via its ability to promote rRNA transcription. Involved in hematopoietic stem and progenitor cell (HSPC) growth and survival by promoting rRNA transcription in growth conditions and inhibiting translation in response to stress, respectively. Mediates the crosstalk between myeloid and intestinal epithelial cells to protect the intestinal epithelial barrier integrity: secreted by myeloid cells and promotes intestinal epithelial cells proliferation and survival. Also mediates osteoclast-endothelial cell crosstalk in growing bone: produced by osteoclasts and protects the neighboring vascular cells against senescence by promoting rRNA transcription. The chain is Angiogenin (ANG) from Gorilla gorilla gorilla (Western lowland gorilla).